The primary structure comprises 363 residues: UDP-N-acetylglucosamine--N-acetylmuramyl-(pentapeptide) pyrophosphoryl-undecaprenol N-acetylglucosamine transferase (363 aa).

UDP-N-acetyl-alpha-D-glucosamine contacts are provided by residues 10–12 (TGG), Asn-124, Ser-195, Ile-248, and Gln-293.

Belongs to the glycosyltransferase 28 family. MurG subfamily.

Its subcellular location is the cell membrane. It carries out the reaction Mur2Ac(oyl-L-Ala-gamma-D-Glu-L-Lys-D-Ala-D-Ala)-di-trans,octa-cis-undecaprenyl diphosphate + UDP-N-acetyl-alpha-D-glucosamine = beta-D-GlcNAc-(1-&gt;4)-Mur2Ac(oyl-L-Ala-gamma-D-Glu-L-Lys-D-Ala-D-Ala)-di-trans,octa-cis-undecaprenyl diphosphate + UDP + H(+). It participates in cell wall biogenesis; peptidoglycan biosynthesis. Functionally, cell wall formation. Catalyzes the transfer of a GlcNAc subunit on undecaprenyl-pyrophosphoryl-MurNAc-pentapeptide (lipid intermediate I) to form undecaprenyl-pyrophosphoryl-MurNAc-(pentapeptide)GlcNAc (lipid intermediate II). In Lacticaseibacillus casei (strain BL23) (Lactobacillus casei), this protein is UDP-N-acetylglucosamine--N-acetylmuramyl-(pentapeptide) pyrophosphoryl-undecaprenol N-acetylglucosamine transferase.